The sequence spans 106 residues: Envelope small membrane protein (106 aa).

The Virion surface segment spans residues 1-11 (MMNLLNTSLEE). Residues 12 to 32 (NGSFLTALYVICEFVALYLLG) form a helical membrane-spanning segment. Over 33–106 (RALQAFVQAA…ANFQNGKLHT (74 aa)) the chain is Intravirion.

Belongs to the gammacoronaviruses E protein family. Homooligomer. Interacts with the M membrane protein in the budding compartment of the host cell, which is located between endoplasmic reticulum and the Golgi complex. The cytoplasmic tails of both proteins are important for this function. Interacts with Nucleoprotein.

Its subcellular location is the host Golgi apparatus membrane. Its function is as follows. Plays a central role in virus morphogenesis and assembly. Acts as a viroporin and self-assembles in host membranes forming pentameric protein-lipid pores that allow ion transport. Also plays a role in the induction of apoptosis. The polypeptide is Envelope small membrane protein (Gallus gallus (Chicken)).